Here is a 248-residue protein sequence, read N- to C-terminus: Pyridoxine 5'-phosphate synthase (248 aa).

Residue asparagine 10 participates in 3-amino-2-oxopropyl phosphate binding. 12-13 (DH) serves as a coordination point for 1-deoxy-D-xylulose 5-phosphate. Arginine 21 lines the 3-amino-2-oxopropyl phosphate pocket. Histidine 46 acts as the Proton acceptor in catalysis. 1-deoxy-D-xylulose 5-phosphate contacts are provided by arginine 48 and histidine 53. Glutamate 73 serves as the catalytic Proton acceptor. Position 103 (threonine 103) interacts with 1-deoxy-D-xylulose 5-phosphate. Histidine 194 functions as the Proton donor in the catalytic mechanism. 3-amino-2-oxopropyl phosphate-binding positions include glycine 195 and 216 to 217 (GH).

This sequence belongs to the PNP synthase family. As to quaternary structure, homooctamer; tetramer of dimers.

Its subcellular location is the cytoplasm. The enzyme catalyses 3-amino-2-oxopropyl phosphate + 1-deoxy-D-xylulose 5-phosphate = pyridoxine 5'-phosphate + phosphate + 2 H2O + H(+). It functions in the pathway cofactor biosynthesis; pyridoxine 5'-phosphate biosynthesis; pyridoxine 5'-phosphate from D-erythrose 4-phosphate: step 5/5. Its function is as follows. Catalyzes the complicated ring closure reaction between the two acyclic compounds 1-deoxy-D-xylulose-5-phosphate (DXP) and 3-amino-2-oxopropyl phosphate (1-amino-acetone-3-phosphate or AAP) to form pyridoxine 5'-phosphate (PNP) and inorganic phosphate. The sequence is that of Pyridoxine 5'-phosphate synthase from Legionella pneumophila (strain Lens).